A 286-amino-acid polypeptide reads, in one-letter code: Lipoyl synthase (286 aa).

The [4Fe-4S] cluster site is built by C34, C39, C45, C60, C64, C67, and S271. The region spanning 46 to 260 (WESGTATFMI…EESAYSIGFS (215 aa)) is the Radical SAM core domain.

The protein belongs to the radical SAM superfamily. Lipoyl synthase family. It depends on [4Fe-4S] cluster as a cofactor.

It localises to the cytoplasm. The catalysed reaction is [[Fe-S] cluster scaffold protein carrying a second [4Fe-4S](2+) cluster] + N(6)-octanoyl-L-lysyl-[protein] + 2 oxidized [2Fe-2S]-[ferredoxin] + 2 S-adenosyl-L-methionine + 4 H(+) = [[Fe-S] cluster scaffold protein] + N(6)-[(R)-dihydrolipoyl]-L-lysyl-[protein] + 4 Fe(3+) + 2 hydrogen sulfide + 2 5'-deoxyadenosine + 2 L-methionine + 2 reduced [2Fe-2S]-[ferredoxin]. Its pathway is protein modification; protein lipoylation via endogenous pathway; protein N(6)-(lipoyl)lysine from octanoyl-[acyl-carrier-protein]: step 2/2. Functionally, catalyzes the radical-mediated insertion of two sulfur atoms into the C-6 and C-8 positions of the octanoyl moiety bound to the lipoyl domains of lipoate-dependent enzymes, thereby converting the octanoylated domains into lipoylated derivatives. This Picrophilus torridus (strain ATCC 700027 / DSM 9790 / JCM 10055 / NBRC 100828 / KAW 2/3) protein is Lipoyl synthase.